Reading from the N-terminus, the 171-residue chain is Methylated-DNA--protein-cysteine methyltransferase (171 aa).

The active-site Nucleophile; methyl group acceptor is the Cys-139.

The protein belongs to the MGMT family.

It is found in the cytoplasm. It catalyses the reaction a 6-O-methyl-2'-deoxyguanosine in DNA + L-cysteinyl-[protein] = S-methyl-L-cysteinyl-[protein] + a 2'-deoxyguanosine in DNA. The catalysed reaction is a 4-O-methyl-thymidine in DNA + L-cysteinyl-[protein] = a thymidine in DNA + S-methyl-L-cysteinyl-[protein]. Involved in the cellular defense against the biological effects of O6-methylguanine (O6-MeG) and O4-methylthymine (O4-MeT) in DNA. Repairs the methylated nucleobase in DNA by stoichiometrically transferring the methyl group to a cysteine residue in the enzyme. This is a suicide reaction: the enzyme is irreversibly inactivated. In Salmonella typhi, this protein is Methylated-DNA--protein-cysteine methyltransferase.